The following is a 491-amino-acid chain: MFCSAQKGSCSSRVSSSGAVGSRGCTGSGSSYGLGGGSAWGFQGSSSSWGLSGGSKGSIGGGFSSCSVRGGFGAGSSFGGGSGFGGGSSGGVSSYGGSLGGGLGGIGGYDGGLLSGSEKQTMQGLNDRLANYLDKVRALEEANTDLETKIKDWYGRHGSGKDGPGRDYSQYCSVIEDLKNQIISATCENARLALQIDNARLAADDFRMKYEHELCLRQSLEADINGLRKVLDEMTMTRCDLEMQIEGLTEELVFLRKNHEEEMKCLQGSSGGDVTVEMNATPGTDLTKLLNDMRAQYEAMAEQNRQEAEKQFNERSACLQAQISTDAGAANCAKSEVMELRRTVQTLEIELQSQLALKCSLEGTLADTEARYVAQLSGIQTQISSLEEQLSQIRGETQCQSAEYECLLDIKTRLEQEIETYRRLLNGDGGGCDYRNLVSRQVVLNDSNFGSCSGQEKDPSKTRVTKTIIEEVVDGKVVSSQVSNISEVKIK.

Residues 1–23 are disordered; the sequence is MFCSAQKGSCSSRVSSSGAVGSR. A head region spans residues 1-117; that stretch reads MFCSAQKGSC…GYDGGLLSGS (117 aa). The span at 8-23 shows a compositional bias: low complexity; the sequence is GSCSSRVSSSGAVGSR. Residues 118–153 form a coil 1A region; it reads EKQTMQGLNDRLANYLDKVRALEEANTDLETKIKDW. Positions 118–432 constitute an IF rod domain; it reads EKQTMQGLND…RLLNGDGGGC (315 aa). The interval 154–174 is linker 1; that stretch reads YGRHGSGKDGPGRDYSQYCSV. Positions 175 to 266 are coil 1B; it reads IEDLKNQIIS…KNHEEEMKCL (92 aa). The linker 12 stretch occupies residues 267–289; it reads QGSSGGDVTVEMNATPGTDLTKL. Positions 290–428 are coil 2; it reads LNDMRAQYEA…ETYRRLLNGD (139 aa). The tract at residues 429–491 is tail; the sequence is GGGCDYRNLV…VSNISEVKIK (63 aa).

The protein belongs to the intermediate filament family. Heterotetramer of two type I and two type II keratins.

The sequence is that of Keratin, type I cytoskeletal 24 (Krt24) from Rattus norvegicus (Rat).